A 223-amino-acid chain; its full sequence is Ribonuclease HII (223 aa).

An RNase H type-2 domain is found at 32-223; sequence LYIAGVDEVG…LKKRYRDYMS (192 aa). A divalent metal cation-binding residues include aspartate 38, glutamate 39, and aspartate 130.

This sequence belongs to the RNase HII family. It depends on Mn(2+) as a cofactor. Mg(2+) is required as a cofactor.

It localises to the cytoplasm. The enzyme catalyses Endonucleolytic cleavage to 5'-phosphomonoester.. In terms of biological role, endonuclease that specifically degrades the RNA of RNA-DNA hybrids. The polypeptide is Ribonuclease HII (Bartonella henselae (strain ATCC 49882 / DSM 28221 / CCUG 30454 / Houston 1) (Rochalimaea henselae)).